Consider the following 499-residue polypeptide: Lysine--tRNA ligase (499 aa).

The Mg(2+) site is built by Glu408 and Glu415.

The protein belongs to the class-II aminoacyl-tRNA synthetase family. In terms of assembly, homodimer. Requires Mg(2+) as cofactor.

It localises to the cytoplasm. The enzyme catalyses tRNA(Lys) + L-lysine + ATP = L-lysyl-tRNA(Lys) + AMP + diphosphate. This is Lysine--tRNA ligase from Bacillus cereus (strain B4264).